We begin with the raw amino-acid sequence, 536 residues long: Atrial natriuretic peptide receptor 3 (536 aa).

The N-terminal stretch at 1–26 (MRSLLLFTFSACVLLARVLLAGGASS) is a signal peptide. Positions 27–40 (GAGDTRPGSRRRAR) are excised as a propeptide. Topologically, residues 41-478 (EALAAQKIEV…KSSGGLEESA (438 aa)) are extracellular. Asn81 carries N-linked (GlcNAc...) asparagine glycosylation. 3 residues coordinate chloride: Ser101, Val130, and Cys131. Disulfide bonds link Cys103/Cys131 and Cys208/Cys256. Asn288 and Asn389 each carry an N-linked (GlcNAc...) asparagine glycan. A helical transmembrane segment spans residues 479 to 499 (VTGIVVGALLGAGLLMAFYFF). Residues 500–536 (RKKYRITIERRNQQEESNIGKHRELREDSIRSHFSVA) are Cytoplasmic-facing.

The protein belongs to the ANF receptor family. As to quaternary structure, homodimer; disulfide-linked. Interacts with OSTN.

The protein resides in the cell membrane. In terms of biological role, receptor for the natriuretic peptide hormones, binding with similar affinities atrial natriuretic peptide NPPA/ANP, brain natriuretic peptide NPPB/BNP, and C-type natriuretic peptide NPPC/CNP. May function as a clearance receptor for NPPA, NPPB and NPPC, regulating their local concentrations and effects. Acts as a regulator of osteoblast differentiation and bone growth by binding to its ligand osteocrin, thereby preventing binding between NPR3/NPR-C and natriuretic peptides, leading to increase cGMP production. The sequence is that of Atrial natriuretic peptide receptor 3 (Npr3) from Mus musculus (Mouse).